The sequence spans 128 residues: Iron-sulfur cluster insertion protein ErpA (128 aa).

Iron-sulfur cluster contacts are provided by Cys56, Cys120, and Cys122.

This sequence belongs to the HesB/IscA family. As to quaternary structure, homodimer. Iron-sulfur cluster serves as cofactor.

In terms of biological role, required for insertion of 4Fe-4S clusters for at least IspG. The polypeptide is Iron-sulfur cluster insertion protein ErpA (Xanthomonas campestris pv. campestris (strain 8004)).